Consider the following 366-residue polypeptide: Peptide chain release factor 2 (366 aa).

Glutamine 246 carries the N5-methylglutamine modification.

It belongs to the prokaryotic/mitochondrial release factor family. Methylated by PrmC. Methylation increases the termination efficiency of RF2.

It localises to the cytoplasm. In terms of biological role, peptide chain release factor 2 directs the termination of translation in response to the peptide chain termination codons UGA and UAA. This Frankia casuarinae (strain DSM 45818 / CECT 9043 / HFP020203 / CcI3) protein is Peptide chain release factor 2.